Consider the following 290-residue polypeptide: Putative phosphatase MPN_427 (290 aa).

The active-site Nucleophile is Asp16. Asp16 provides a ligand contact to Mg(2+). Leu17 is a binding site for phosphate. Asp18 contributes to the Mg(2+) binding site. Phosphate contacts are provided by residues 53–54 (TG) and Lys216. The Mg(2+) site is built by Asp239 and Ser240. Asn242 contacts phosphate.

This sequence belongs to the HAD-like hydrolase superfamily. Cof family. Mg(2+) is required as a cofactor.

This chain is Putative phosphatase MPN_427, found in Mycoplasma pneumoniae (strain ATCC 29342 / M129 / Subtype 1) (Mycoplasmoides pneumoniae).